The following is a 105-amino-acid chain: Co-chaperonin GroES (105 aa).

It belongs to the GroES chaperonin family. As to quaternary structure, heptamer of 7 subunits arranged in a ring. Interacts with the chaperonin GroEL.

The protein resides in the cytoplasm. Together with the chaperonin GroEL, plays an essential role in assisting protein folding. The GroEL-GroES system forms a nano-cage that allows encapsulation of the non-native substrate proteins and provides a physical environment optimized to promote and accelerate protein folding. GroES binds to the apical surface of the GroEL ring, thereby capping the opening of the GroEL channel. The sequence is that of Co-chaperonin GroES from Parvibaculum lavamentivorans (strain DS-1 / DSM 13023 / NCIMB 13966).